Consider the following 91-residue polypeptide: Small ribosomal subunit protein uS19m (91 aa).

Belongs to the universal ribosomal protein uS19 family. In terms of assembly, component of the mitochondrial small ribosomal subunit (mt-SSU). Mature N.crassa 74S mitochondrial ribosomes consist of a small (37S) and a large (54S) subunit. The 37S small subunit contains a 16S ribosomal RNA (16S mt-rRNA) and 32 different proteins. The 54S large subunit contains a 23S rRNA (23S mt-rRNA) and 42 different proteins.

It is found in the mitochondrion. Component of the mitochondrial ribosome (mitoribosome), a dedicated translation machinery responsible for the synthesis of mitochondrial genome-encoded proteins, including at least some of the essential transmembrane subunits of the mitochondrial respiratory chain. The mitoribosomes are attached to the mitochondrial inner membrane and translation products are cotranslationally integrated into the membrane. The sequence is that of Small ribosomal subunit protein uS19m (rsm19) from Neurospora crassa (strain ATCC 24698 / 74-OR23-1A / CBS 708.71 / DSM 1257 / FGSC 987).